The chain runs to 343 residues: Protein RecA (343 aa).

66-73 (GPESSGKT) contributes to the ATP binding site. The tract at residues 319–343 (IERQIREKHLPKRSAKADEAESAEA) is disordered.

The protein belongs to the RecA family.

The protein resides in the cytoplasm. Functionally, can catalyze the hydrolysis of ATP in the presence of single-stranded DNA, the ATP-dependent uptake of single-stranded DNA by duplex DNA, and the ATP-dependent hybridization of homologous single-stranded DNAs. It interacts with LexA causing its activation and leading to its autocatalytic cleavage. The chain is Protein RecA from Thioalkalivibrio sulfidiphilus (strain HL-EbGR7).